A 462-amino-acid polypeptide reads, in one-letter code: Adenylosuccinate lyase (462 aa).

N(6)-(1,2-dicarboxyethyl)-AMP-binding positions include 21–22, 87–89, and 114–115; these read RY, KHD, and TS. The active-site Proton donor/acceptor is the H162. Position 236 (Q236) interacts with N(6)-(1,2-dicarboxyethyl)-AMP. S287 serves as the catalytic Proton donor/acceptor. Residues S288, 293–295, and 332–336 each bind N(6)-(1,2-dicarboxyethyl)-AMP; these read KRN and SAERC.

The protein belongs to the lyase 1 family. Adenylosuccinate lyase subfamily. As to quaternary structure, homotetramer. Residues from neighboring subunits contribute catalytic and substrate-binding residues to each active site.

The enzyme catalyses N(6)-(1,2-dicarboxyethyl)-AMP = fumarate + AMP. The catalysed reaction is (2S)-2-[5-amino-1-(5-phospho-beta-D-ribosyl)imidazole-4-carboxamido]succinate = 5-amino-1-(5-phospho-beta-D-ribosyl)imidazole-4-carboxamide + fumarate. Its pathway is purine metabolism; AMP biosynthesis via de novo pathway; AMP from IMP: step 2/2. It functions in the pathway purine metabolism; IMP biosynthesis via de novo pathway; 5-amino-1-(5-phospho-D-ribosyl)imidazole-4-carboxamide from 5-amino-1-(5-phospho-D-ribosyl)imidazole-4-carboxylate: step 2/2. Catalyzes two reactions in de novo purine nucleotide biosynthesis. Catalyzes the breakdown of 5-aminoimidazole- (N-succinylocarboxamide) ribotide (SAICAR or 2-[5-amino-1-(5-phospho-beta-D-ribosyl)imidazole-4-carboxamido]succinate) to 5-aminoimidazole-4-carboxamide ribotide (AICAR or 5-amino-1-(5-phospho-beta-D-ribosyl)imidazole-4-carboxamide) and fumarate, and of adenylosuccinate (ADS or N(6)-(1,2-dicarboxyethyl)-AMP) to adenosine monophosphate (AMP) and fumarate. The sequence is that of Adenylosuccinate lyase (purB) from Methanocaldococcus jannaschii (strain ATCC 43067 / DSM 2661 / JAL-1 / JCM 10045 / NBRC 100440) (Methanococcus jannaschii).